Reading from the N-terminus, the 112-residue chain is Tetracenomycin-F1 monooxygenase (112 aa).

Positions 11–100 (FTLVNVFGVA…SRPKPIFCEV (90 aa)) constitute an ABM domain.

Homotrimer.

It catalyses the reaction tetracenomycin F1 + O2 = tetracenomycin D3 + H2O + H(+). It functions in the pathway antibiotic biosynthesis; tetracenomycin C biosynthesis. Inhibited by p-chloromercuribenzoic acid, N-ethylmaleimide and diethyl pyrocarbonate. Oxygenase required for conversion of tetracenomycin F1 to tetracenomycin D3. The polypeptide is Tetracenomycin-F1 monooxygenase (tcmH) (Streptomyces glaucescens).